Consider the following 417-residue polypeptide: D-amino acid dehydrogenase (417 aa).

FAD is bound at residue 3–17; sequence AVVLGSGVVGLMSAW.

Belongs to the DadA oxidoreductase family. Requires FAD as cofactor.

It carries out the reaction a D-alpha-amino acid + A + H2O = a 2-oxocarboxylate + AH2 + NH4(+). Functionally, oxidative deamination of D-amino acids. The polypeptide is D-amino acid dehydrogenase (Vibrio vulnificus (strain YJ016)).